A 1037-amino-acid chain; its full sequence is Mediator of RNA polymerase II transcription subunit 14 (1037 aa).

The protein belongs to the Mediator complex subunit 14 family. Component of the Mediator complex.

Its subcellular location is the nucleus. Functionally, component of the Mediator complex, a coactivator involved in the regulated transcription of nearly all RNA polymerase II-dependent genes. Mediator functions as a bridge to convey information from gene-specific regulatory proteins to the basal RNA polymerase II transcription machinery. Mediator is recruited to promoters by direct interactions with regulatory proteins and serves as a scaffold for the assembly of a functional preinitiation complex with RNA polymerase II and the general transcription factors. The chain is Mediator of RNA polymerase II transcription subunit 14 (RGR1) from Candida glabrata (strain ATCC 2001 / BCRC 20586 / JCM 3761 / NBRC 0622 / NRRL Y-65 / CBS 138) (Yeast).